We begin with the raw amino-acid sequence, 1264 residues long: Regulator of G-protein signaling 22 (1264 aa).

Residues 565–587 are disordered; sequence EEFSLSQPPKSPNKSPEVKTATQ. Residues 568–578 show a composition bias toward polar residues; sequence SLSQPPKSPNK. RGS domains lie at 852 to 980 and 1021 to 1145; these read KFSD…AARQ and AFRK…TDEN. Positions 1142–1174 form a coiled coil; sequence TDENIMSVLERRQEYNKQKKKLAVLEDEKSGKD.

As to quaternary structure, interacts with GNA11, GNA12 and GNA13. In terms of tissue distribution, testis-specific. Expressed in Leydig cells and spermatogenic cells from the spermatogonia to spermatid stages (at protein level).

Its subcellular location is the cytoplasm. It is found in the nucleus. Its function is as follows. Inhibits signal transduction by increasing the GTPase activity of G protein alpha subunits thereby driving them into their inactive GDP-bound form. The sequence is that of Regulator of G-protein signaling 22 (RGS22) from Homo sapiens (Human).